We begin with the raw amino-acid sequence, 67 residues long: Large ribosomal subunit protein bL35 (67 aa).

It belongs to the bacterial ribosomal protein bL35 family.

The polypeptide is Large ribosomal subunit protein bL35 (Leptospira borgpetersenii serovar Hardjo-bovis (strain JB197)).